Here is a 907-residue protein sequence, read N- to C-terminus: Avirulence protein A (907 aa).

Composition is skewed to polar residues over residues 1–11 and 124–136; these read MWNVSKSSNNL and AGSNGDINKSSDP. Disordered regions lie at residues 1–47 and 116–157; these read MWNV…HDQL and NDDF…KKSY.

The protein is Avirulence protein A (avrA) of Pseudomonas savastanoi pv. glycinea (Pseudomonas syringae pv. glycinea).